Reading from the N-terminus, the 341-residue chain is TERF1-interacting nuclear factor 2 (341 aa).

Ala2 carries the N-acetylalanine modification. Residues His243–Cys265 carry the TBM motif. The Nuclear localization signal motif lies at Pro249–Ser255. Residues Pro283–Val341 form a disordered region.

Monomer. Found in a complex with POT1; TERF1 and TNKS1. Component of the shelterin complex (telosome) composed of TERF1, TERF2, TINF2, TERF2IP, ACD and POT1. Interacts with TERF1.

The protein resides in the nucleus. Its subcellular location is the chromosome. It is found in the telomere. Functionally, component of the shelterin complex (telosome) that is involved in the regulation of telomere length and protection. Shelterin associates with arrays of double-stranded TTAGGG repeats added by telomerase and protects chromosome ends; without its protective activity, telomeres are no longer hidden from the DNA damage surveillance and chromosome ends are inappropriately processed by DNA repair pathways. Plays a role in shelterin complex assembly. This chain is TERF1-interacting nuclear factor 2 (Tinf2), found in Mus musculus (Mouse).